The chain runs to 98 residues: Large ribosomal subunit protein eL30 (98 aa).

This sequence belongs to the eukaryotic ribosomal protein eL30 family.

In Methanothermobacter thermautotrophicus (strain ATCC 29096 / DSM 1053 / JCM 10044 / NBRC 100330 / Delta H) (Methanobacterium thermoautotrophicum), this protein is Large ribosomal subunit protein eL30 (rpl30e).